Here is a 483-residue protein sequence, read N- to C-terminus: Glutamyl-tRNA(Gln) amidotransferase subunit A (483 aa).

Catalysis depends on charge relay system residues Lys75 and Ser150. Ser174 (acyl-ester intermediate) is an active-site residue.

This sequence belongs to the amidase family. GatA subfamily. In terms of assembly, heterotrimer of A, B and C subunits.

The enzyme catalyses L-glutamyl-tRNA(Gln) + L-glutamine + ATP + H2O = L-glutaminyl-tRNA(Gln) + L-glutamate + ADP + phosphate + H(+). Functionally, allows the formation of correctly charged Gln-tRNA(Gln) through the transamidation of misacylated Glu-tRNA(Gln) in organisms which lack glutaminyl-tRNA synthetase. The reaction takes place in the presence of glutamine and ATP through an activated gamma-phospho-Glu-tRNA(Gln). This chain is Glutamyl-tRNA(Gln) amidotransferase subunit A, found in Deinococcus geothermalis (strain DSM 11300 / CIP 105573 / AG-3a).